The following is a 569-amino-acid chain: Probable santalene synthase (569 aa).

Arg284, Asp321, Asp325, Arg460, and Asn463 together coordinate (2E)-geranyl diphosphate. The Mg(2+) site is built by Asp321 and Asp325. The DDXXD motif motif lies at 321–325 (DDAYD). Asn463, Thr467, and Glu471 together coordinate Mg(2+).

Belongs to the terpene synthase family. Tpsb subfamily. Mg(2+) is required as a cofactor. The cofactor is Mn(2+).

Its function is as follows. Catalyzes the formation of santalene. The sequence is that of Probable santalene synthase (SSY) from Santalum murrayanum (Bitter quandong).